The following is a 210-amino-acid chain: Syntaxin-binding protein 6 (210 aa).

Serine 2 carries the N-acetylserine modification. Residues 151 to 210 (GNSILHSAADSVTSAVQKASQALNERGERLGRAEEKTEDMKNSAQQFAETAHKLAMKHKC) enclose the v-SNARE coiled-coil homology domain.

As to quaternary structure, part of a ternary complex containing SNAP25 and STX1A that can be dissociated by NAPA and NSF. Interacts with STX4A.

Its subcellular location is the cytoplasm. The protein resides in the membrane. In terms of biological role, forms non-fusogenic complexes with SNAP25 and STX1A and may thereby modulate the formation of functional SNARE complexes and exocytosis. This is Syntaxin-binding protein 6 (Stxbp6) from Mus musculus (Mouse).